Consider the following 181-residue polypeptide: Ribulose bisphosphate carboxylase small subunit, chloroplastic 2 (181 aa).

The transit peptide at 1–57 (MAFLIMSSAAAVATGTNAAQASMIAPFTGLKSATSFPVSRKQNLDITSIASNGGRVQ) directs the protein to the chloroplast.

It belongs to the RuBisCO small chain family. As to quaternary structure, heterohexadecamer of 8 large and 8 small subunits.

Its subcellular location is the plastid. The protein resides in the chloroplast. Its function is as follows. RuBisCO catalyzes two reactions: the carboxylation of D-ribulose 1,5-bisphosphate, the primary event in carbon dioxide fixation, as well as the oxidative fragmentation of the pentose substrate. Both reactions occur simultaneously and in competition at the same active site. Although the small subunit is not catalytic it is essential for maximal activity. The chain is Ribulose bisphosphate carboxylase small subunit, chloroplastic 2 from Nicotiana sylvestris (Wood tobacco).